Here is a 282-residue protein sequence, read N- to C-terminus: Alpha/beta-gliadin A-III (282 aa).

The signal sequence occupies residues 1 to 20 (MKTFLILALLAIVATTATSA). Positions 27–59 (QLQPQNPSQQQPQEQVPLMQQQQQFPGQQEQFP) are enriched in low complexity. Disordered regions lie at residues 27-122 (QLQP…AQQQ) and 220-240 (SGQV…SVQP). Residues 60-111 (PQQPYPHQQPFPSQQPYPQPQPFPPQLPYPQTQPFPPQQPYPQPQPQYPQPQ) are compositionally biased toward pro residues. Low complexity predominate over residues 112 to 122 (QPISQQQAQQQ). Residues 224 to 240 (SFQSSQQNPQAQGSVQP) show a composition bias toward polar residues.

This sequence belongs to the gliadin/glutenin family. In terms of processing, substrate of transglutaminase.

Gliadin is the major seed storage protein in wheat. This Triticum aestivum (Wheat) protein is Alpha/beta-gliadin A-III.